The sequence spans 364 residues: Mitogen-activated protein kinase 11 (364 aa).

Positions 24–308 (LQGLRPVGSG…AAEALAHAYF (285 aa)) constitute a Protein kinase domain. Residues 30 to 38 (VGSGAYGSV) and Lys-53 contribute to the ATP site. Nilotinib is bound at residue Glu-71. Residue Asp-150 is the Proton acceptor of the active site. Thr-180 bears the Phosphothreonine; by MAP2K3, MAP2K4 and MAP2K6 mark. The TXY signature appears at 180–182 (TGY). At Tyr-182 the chain carries Phosphotyrosine; by MAP2K3, MAP2K4 and MAP2K6. Disordered regions lie at residues 311–331 (YHDP…EAKE) and 343–364 (QEVL…EIEQ). A compositionally biased stretch (acidic residues) spans 314 to 326 (PEDEPEAEPYDES). Tyr-323 is modified (phosphotyrosine; by ZAP70).

The protein belongs to the protein kinase superfamily. CMGC Ser/Thr protein kinase family. MAP kinase subfamily. Interacts with HDAC3 and DUSP16. Requires Mg(2+) as cofactor. Post-translationally, dually phosphorylated on Thr-180 and Tyr-182 by MAP2K3/MKK3, MAP2K4/MKK4 and MAP2K6/MKK6, which activates the enzyme. Highest levels in the brain and heart. Also expressed in the placenta, lung, liver, skeletal muscle, kidney and pancreas.

It localises to the cytoplasm. It is found in the nucleus. It catalyses the reaction L-seryl-[protein] + ATP = O-phospho-L-seryl-[protein] + ADP + H(+). The catalysed reaction is L-threonyl-[protein] + ATP = O-phospho-L-threonyl-[protein] + ADP + H(+). With respect to regulation, activated by phosphorylation on threonine and tyrosine by MAP2K3/MKK3, MAP2K4/MKK4 and MAP2K6/MKK6. MAP2K3/MKK3 and MAP2K6/MKK6 are both essential for the activation of MAPK11 induced by environmental stress. HDAC3 interacts directly and selectively with MAPK11 to repress ATF2 transcriptional activity, and regulate TNF gene expression in LPS-stimulated cells. Inhibited by SB203580 and pyridinyl-imidazole related compounds. Functionally, serine/threonine kinase which acts as an essential component of the MAP kinase signal transduction pathway. MAPK11 is one of the four p38 MAPKs which play an important role in the cascades of cellular responses evoked by extracellular stimuli such as pro-inflammatory cytokines or physical stress leading to direct activation of transcription factors. Accordingly, p38 MAPKs phosphorylate a broad range of proteins and it has been estimated that they may have approximately 200 to 300 substrates each. MAPK11 functions are mostly redundant with those of MAPK14. Some of the targets are downstream kinases which are activated through phosphorylation and further phosphorylate additional targets. RPS6KA5/MSK1 and RPS6KA4/MSK2 can directly phosphorylate and activate transcription factors such as CREB1, ATF1, the NF-kappa-B isoform RELA/NFKB3, STAT1 and STAT3, but can also phosphorylate histone H3 and the nucleosomal protein HMGN1. RPS6KA5/MSK1 and RPS6KA4/MSK2 play important roles in the rapid induction of immediate-early genes in response to stress or mitogenic stimuli, either by inducing chromatin remodeling or by recruiting the transcription machinery. On the other hand, two other kinase targets, MAPKAPK2/MK2 and MAPKAPK3/MK3, participate in the control of gene expression mostly at the post-transcriptional level, by phosphorylating ZFP36 (tristetraprolin) and ELAVL1, and by regulating EEF2K, which is important for the elongation of mRNA during translation. MKNK1/MNK1 and MKNK2/MNK2, two other kinases activated by p38 MAPKs, regulate protein synthesis by phosphorylating the initiation factor EIF4E2. In the cytoplasm, the p38 MAPK pathway is an important regulator of protein turnover. For example, CFLAR is an inhibitor of TNF-induced apoptosis whose proteasome-mediated degradation is regulated by p38 MAPK phosphorylation. Ectodomain shedding of transmembrane proteins is regulated by p38 MAPKs as well. In response to inflammatory stimuli, p38 MAPKs phosphorylate the membrane-associated metalloprotease ADAM17. Such phosphorylation is required for ADAM17-mediated ectodomain shedding of TGF-alpha family ligands, which results in the activation of EGFR signaling and cell proliferation. Additional examples of p38 MAPK substrates are the FGFR1. FGFR1 can be translocated from the extracellular space into the cytosol and nucleus of target cells, and regulates processes such as rRNA synthesis and cell growth. FGFR1 translocation requires p38 MAPK activation. In the nucleus, many transcription factors are phosphorylated and activated by p38 MAPKs in response to different stimuli. Classical examples include ATF1, ATF2, ATF6, ELK1, PTPRH, DDIT3, TP53/p53 and MEF2C and MEF2A. The p38 MAPKs are emerging as important modulators of gene expression by regulating chromatin modifiers and remodelers. The promoters of several genes involved in the inflammatory response, such as IL6, IL8 and IL12B, display a p38 MAPK-dependent enrichment of histone H3 phosphorylation on 'Ser-10' (H3S10ph) in LPS-stimulated myeloid cells. This phosphorylation enhances the accessibility of the cryptic NF-kappa-B-binding sites marking promoters for increased NF-kappa-B recruitment. Phosphorylates NLRP1 downstream of MAP3K20/ZAK in response to UV-B irradiation and ribosome collisions, promoting activation of the NLRP1 inflammasome and pyroptosis. Phosphorylates methyltransferase DOT1L on 'Ser-834', 'Thr-900', 'Ser-902', 'Thr-984', 'Ser-1001', 'Ser-1009' and 'Ser-1104'. This Homo sapiens (Human) protein is Mitogen-activated protein kinase 11 (MAPK11).